The following is a 181-amino-acid chain: Thioredoxin-like protein CITRX1, chloroplastic (181 aa).

The disordered stretch occupies residues 1 to 20 (MQAATLSFHPSAPPPQTSAC). Residues 1–70 (MQAATLSFHP…PAVATGKYVR (70 aa)) constitute a chloroplast transit peptide. The Thioredoxin domain maps to 71-181 (EDYLVKKVSA…MMRDIINNDL (111 aa)). Catalysis depends on nucleophile residues Cys-104 and Cys-107. Cys-104 and Cys-107 form a disulfide bridge.

This sequence belongs to the thioredoxin family. Plant CITRX-type subfamily.

It is found in the plastid. The protein localises to the chloroplast. In terms of biological role, probable thiol-disulfide oxidoreductase that may play a role in proper chloroplast development. In Nicotiana benthamiana, this protein is Thioredoxin-like protein CITRX1, chloroplastic.